We begin with the raw amino-acid sequence, 365 residues long: Phosphatidylcholine:ceramide cholinephosphotransferase 2 (365 aa).

A disordered region spans residues 9-50; that stretch reads LEGHLESQTNDSTNTYTSPTEAVEEEGKNGKGKPKTLSNGLR. Over residues 14–28 the composition is skewed to polar residues; the sequence is ESQTNDSTNTYTSPT. 5 helical membrane-spanning segments follow: residues 80 to 100, 128 to 148, 159 to 179, 219 to 239, and 248 to 268; these read GIAF…ITVV, FSVS…QWLF, FFFI…VTTL, ILCG…TYLF, and FWWY…CILV. His229 is a catalytic residue. Active-site residues include His272 and Asp276. The chain crosses the membrane as a helical span at residues 273-290; sequence YTVDVIIAYYITTRLFWW. At 291–365 the chain is on the cytoplasmic side; sequence YHSMANEKNL…KIGEDNEKST (75 aa). Residues Cys331, Cys332, Cys343, and Cys348 are each lipidated (S-palmitoyl cysteine).

The protein belongs to the sphingomyelin synthase family. Post-translationally, palmitoylated on Cys-331, Cys-332, Cys-343 and Cys-348; which plays an important role in plasma membrane localization. Highest expression is detected in cortical bone, followed by vertebrae, kidney and liver. Expression levels are very low in spleen, muscle, heart, brown fat and thymus. Expressed in macrophages.

The protein resides in the cell membrane. Its subcellular location is the golgi apparatus membrane. It carries out the reaction an N-acylsphing-4-enine + a 1,2-diacyl-sn-glycero-3-phosphocholine = a sphingomyelin + a 1,2-diacyl-sn-glycerol. The catalysed reaction is an N-acylsphinganine + a 1,2-diacyl-sn-glycero-3-phosphocholine = an N-acylsphinganine-1-phosphocholine + a 1,2-diacyl-sn-glycerol. It catalyses the reaction an N-acyl-(4R)-4-hydroxysphinganine + a 1,2-diacyl-sn-glycero-3-phosphocholine = an N-acyl-(4R)-4-hydroxysphinganine-phosphocholine + a 1,2-diacyl-sn-glycerol. The enzyme catalyses an N-acylsphing-4-enine + a 1,2-diacyl-sn-glycero-3-phosphoethanolamine = an N-acylsphing-4-enine 1-phosphoethanolamine + a 1,2-diacyl-sn-glycerol. It carries out the reaction an N-acylsphinganine + a 1,2-diacyl-sn-glycero-3-phosphoethanolamine = an N-acylsphinganine-1-phosphoethanolamine + a 1,2-diacyl-sn-glycerol. The catalysed reaction is an N-acyl-(4R)-4-hydroxysphinganine + a 1,2-diacyl-sn-glycero-3-phosphoethanolamine = an N-acyl-(4R)-4-hydroxysphinganine-1-phosphoethanolamine + a 1,2-diacyl-sn-glycerol. It catalyses the reaction 1,2-dihexadecanoyl-sn-glycero-3-phosphocholine + an N-acylsphing-4-enine = 1,2-dihexadecanoyl-sn-glycerol + a sphingomyelin. The enzyme catalyses 1-(9Z-octadecenoyl)-2-acyl-sn-3-glycerol + a sphingomyelin = a 1-(9Z-octadecenoyl)-2-acyl-sn-glycero-3-phosphocholine + an N-acylsphing-4-enine. It carries out the reaction N-hexadecanoylsphinganine + a 1,2-diacyl-sn-glycero-3-phosphocholine = N-hexadecanoyl-sphinganine-1-phosphocholine + a 1,2-diacyl-sn-glycerol. The catalysed reaction is N-hexadecanoyl-(4R)-hydroxysphinganine + a 1,2-diacyl-sn-glycero-3-phosphocholine = N-hexadecanoyl-(4R)-hydroxysphinganine-phosphocholine + a 1,2-diacyl-sn-glycerol. It catalyses the reaction N-hexadecanoylsphinganine + a 1,2-diacyl-sn-glycero-3-phosphoethanolamine = N-hexadecanoyl-sphinganine-1-phosphoethanolamine + a 1,2-diacyl-sn-glycerol. The enzyme catalyses N-hexadecanoyl-(4R)-hydroxysphinganine + a 1,2-diacyl-sn-glycero-3-phosphoethanolamine = N-hexadecanoyl-(4R)-hydroxysphinganine-1-phosphoethanolamine + a 1,2-diacyl-sn-glycerol. The protein operates within sphingolipid metabolism. Functionally, sphingomyelin synthase that primarily contributes to sphingomyelin synthesis and homeostasis at the plasma membrane. Catalyzes the reversible transfer of phosphocholine moiety in sphingomyelin biosynthesis: in the forward reaction transfers phosphocholine head group of phosphatidylcholine (PC) on to ceramide (CER) to form ceramide phosphocholine (sphingomyelin, SM) and diacylglycerol (DAG) as by-product, and in the reverse reaction transfers phosphocholine from SM to DAG to form PC and CER. The direction of the reaction appears to depend on the levels of CER and DAG in the plasma membrane. Does not use free phosphorylcholine or CDP-choline as donors. Can also transfer phosphoethanolamine head group of phosphatidylethanolamine (PE) on to ceramide (CER) to form ceramide phosphoethanolamine (CPE). Regulates receptor-mediated signal transduction via mitogenic DAG and proapoptotic CER, as well as via SM, a structural component of membrane rafts that serve as platforms for signal transduction and protein sorting. To a lesser extent, plays a role in secretory transport via regulation of DAG pool at the Golgi apparatus and its downstream effects on PRKD1. Required for normal bone matrix mineralization. The sequence is that of Phosphatidylcholine:ceramide cholinephosphotransferase 2 (Sgms2) from Mus musculus (Mouse).